Consider the following 156-residue polypeptide: 6,7-dimethyl-8-ribityllumazine synthase (156 aa).

5-amino-6-(D-ribitylamino)uracil is bound by residues F23, 57-59 (AYE), and 81-83 (AII). 86 to 87 (ST) contacts (2S)-2-hydroxy-3-oxobutyl phosphate. Catalysis depends on H89, which acts as the Proton donor. Position 114 (F114) interacts with 5-amino-6-(D-ribitylamino)uracil. R128 contributes to the (2S)-2-hydroxy-3-oxobutyl phosphate binding site.

It belongs to the DMRL synthase family.

The catalysed reaction is (2S)-2-hydroxy-3-oxobutyl phosphate + 5-amino-6-(D-ribitylamino)uracil = 6,7-dimethyl-8-(1-D-ribityl)lumazine + phosphate + 2 H2O + H(+). It functions in the pathway cofactor biosynthesis; riboflavin biosynthesis; riboflavin from 2-hydroxy-3-oxobutyl phosphate and 5-amino-6-(D-ribitylamino)uracil: step 1/2. In terms of biological role, catalyzes the formation of 6,7-dimethyl-8-ribityllumazine by condensation of 5-amino-6-(D-ribitylamino)uracil with 3,4-dihydroxy-2-butanone 4-phosphate. This is the penultimate step in the biosynthesis of riboflavin. This chain is 6,7-dimethyl-8-ribityllumazine synthase, found in Campylobacter hominis (strain ATCC BAA-381 / DSM 21671 / CCUG 45161 / LMG 19568 / NCTC 13146 / CH001A).